The sequence spans 690 residues: DNA-directed RNA polymerase subunit beta' (690 aa).

Positions 76, 78, 94, and 97 each coordinate Zn(2+). Residues Asp-496, Asp-498, and Asp-500 each contribute to the Mg(2+) site.

It belongs to the RNA polymerase beta' chain family. RpoC1 subfamily. In plastids the minimal PEP RNA polymerase catalytic core is composed of four subunits: alpha, beta, beta', and beta''. When a (nuclear-encoded) sigma factor is associated with the core the holoenzyme is formed, which can initiate transcription. Requires Mg(2+) as cofactor. Zn(2+) is required as a cofactor.

Its subcellular location is the plastid. It localises to the chloroplast. The catalysed reaction is RNA(n) + a ribonucleoside 5'-triphosphate = RNA(n+1) + diphosphate. DNA-dependent RNA polymerase catalyzes the transcription of DNA into RNA using the four ribonucleoside triphosphates as substrates. This is DNA-directed RNA polymerase subunit beta' from Lemna minor (Common duckweed).